The chain runs to 484 residues: Toluene efflux pump outer membrane protein TtgC (484 aa).

An N-terminal signal peptide occupies residues 1-17 (MTKSLLSLAVTAFILGG). Cysteine 18 carries N-palmitoyl cysteine lipidation. Cysteine 18 carries S-diacylglycerol cysteine lipidation.

This sequence belongs to the outer membrane factor (OMF) (TC 1.B.17) family.

The protein localises to the cell outer membrane. Its function is as follows. The outer membrane component of a constitutive organic solvent efflux system. Is involved in export of toluene, styrene, m-xylene, propylbenzene and ethylbenzene. Also exports AMP and the antibiotics carbenicillin, nalidixic acid, chloramphenicol and tetracycline. The protein is Toluene efflux pump outer membrane protein TtgC (ttgC) of Pseudomonas putida (strain DOT-T1E).